Here is a 237-residue protein sequence, read N- to C-terminus: Large ribosomal subunit protein uL1 (237 aa).

It belongs to the universal ribosomal protein uL1 family. In terms of assembly, part of the 50S ribosomal subunit.

Functionally, binds directly to 23S rRNA. The L1 stalk is quite mobile in the ribosome, and is involved in E site tRNA release. Its function is as follows. Protein L1 is also a translational repressor protein, it controls the translation of the L11 operon by binding to its mRNA. The polypeptide is Large ribosomal subunit protein uL1 (Dehalococcoides mccartyi (strain CBDB1)).